The following is a 673-amino-acid chain: MQSPYIYPQEFDVIVVGGGHAGTEAALASARMGCKTLLLSHNIETLGQMSCNPSIGGIGKGHLVKEVDAMGGAMALATDEGGIQFRILNSSKGPAVRATRAQADRILYKAAIRRRLENQPNLWLFQQAVDDLMVEGDRVVGAVTQVGIRFRSRTVVLTAGTFLDGKIHVGLNNYAAGRAGDPPAVSLSSRLKELKLPQGRLKTGTPPRIDGRTIDFSKCIEQPGDGMPGGTAGPVPVFSFMGGAIPHPQQMPCWITHTNERTHEIIRSGFDRSPMFTGKIDGVGPRYCPSVEDKINRFADKESHQIFLEPEGLTTHEIYPNGISTSLPFDIQYELVRSMAGMENAHILRPGYAIEYDYFDPRALKTTFETRAIGGLFFAGQINGTTGYEEAAAQGMFAGINAALQCRALGGLPNDHGGAWLPRRDEAYLGVLVDDLITKGVTEPYRMFTSRAEYRLMLREDNADMRLTEKGRELGLVDDARWDAFSRKRDAVSRETERLRSLWVNPHNLPLAEAERVLGKSIEREYNLLDLLRRPDVNYAGLMSLEEGKYANPELAAEAAASDDLAKSVIEQIEITAKYAGYIDLQKTEVERAAHYENLKLPTDLDYLQVSALSFEARQTLARHRPETLGMASRISGITPATVSLLLVHLKKNLWKNTVPLKTTDTSTEKAQA.

17-22 (GGGHAG) serves as a coordination point for FAD. Position 284–298 (284–298 (GPRYCPSVEDKINRF)) interacts with NAD(+).

The protein belongs to the MnmG family. Homodimer. Heterotetramer of two MnmE and two MnmG subunits. It depends on FAD as a cofactor.

It is found in the cytoplasm. In terms of biological role, NAD-binding protein involved in the addition of a carboxymethylaminomethyl (cmnm) group at the wobble position (U34) of certain tRNAs, forming tRNA-cmnm(5)s(2)U34. This Polaromonas sp. (strain JS666 / ATCC BAA-500) protein is tRNA uridine 5-carboxymethylaminomethyl modification enzyme MnmG.